A 239-amino-acid polypeptide reads, in one-letter code: Fatty acid metabolism regulator protein (239 aa).

Residues 6 to 74 (KGPASFAEKY…HGKPTQVNNF (69 aa)) enclose the HTH gntR-type domain. The H-T-H motif DNA-binding region spans 34–53 (ERELSELIGVTRTTLREVLQ).

In terms of assembly, homodimer.

It localises to the cytoplasm. Functionally, multifunctional regulator of fatty acid metabolism. This chain is Fatty acid metabolism regulator protein, found in Shewanella denitrificans (strain OS217 / ATCC BAA-1090 / DSM 15013).